The chain runs to 450 residues: Zinc finger protein 277 (450 aa).

N-acetylalanine is present on Ala-2. C2H2-type zinc fingers lie at residues 224–248 (LQCL…KKQH) and 355–381 (HQCR…ETKH).

The protein belongs to the ZNF277 family. In terms of assembly, interacts (via zinc-finger domains) with RPS2/40S ribosomal protein S2, perhaps as nascent RPS2 is synthesized during translation; the interaction is direct; the interaction is extra-ribosomal. Interaction with RPS2 competes with the binding of RPS2 to protein arginine methyltransferase PRMT3. Interacts with Polycomb group (PcG) complex protein BMI1. May be part of a complex including at least ZNF277, BMI1 and RNF2/RING2.

Its subcellular location is the nucleus. In terms of biological role, probable transcription factor. Involved in modulation of cellular senescence; represses transcription of the tumor suppressor gene INK4A/ARF, perhaps acting via the Polycomb group (PcG) complex PRC1. The chain is Zinc finger protein 277 (ZNF277) from Homo sapiens (Human).